Here is a 156-residue protein sequence, read N- to C-terminus: Ribosomally synthesized cyclic peptide victorin precursosr vicA1 (156 aa).

Residues Met1–Ala21 form the signal peptide. Propeptides lie at residues Met22 to Arg36, Lys43 to Arg55, Lys62 to Arg74, Lys81 to Arg93, Lys100 to Arg112, Lys119 to Arg131, and Lys138 to Arg150.

VicA1 is processed by several endopeptidases including kexin proteases as well as the cluster-specific peptidases vicP1 and vicP2 to produce 7 identical copies of the hexapeptide Gly-Leu-Lys-Leu-Ala-Phe, that are further modified to yield victorins. After being excised from the precursor peptide, the core peptides are cyclized and modified post-translationally by enzymes encoded within the gene cluster. The ustYa family protein vicYb is required for the formation of the macrocycle in victorin and the copper amine oxidases (CAOs) vicK1 and vicK2 are responsible for converting victorin to the active form by oxidizing the N-terminal glycyl residue in the peptides to glyoxylate. Relaxed substrate specificity of enzymes in the victorin biosynthetic pathway results in a metabolic grid that produces a set of analogs including victorinines B, C, E or HV-toxin M.

It participates in mycotoxin biosynthesis. Ribosomally synthesized cyclic peptide victorin precursor, part of the gene cluster that mediates the biosynthesis of the secondary metabolite victorin, the molecular basis for Victoria blight of oats. The vicA1 translated product contains a 7-fold repeated peptide embedding the hexapeptide Gly-Leu-Lys-Leu-Ala-Phe, that is converted into the cyclic victorin. The chain is Ribosomally synthesized cyclic peptide victorin precursosr vicA1 from Bipolaris victoriae (strain FI3) (Victoria blight of oats agent).